A 503-amino-acid chain; its full sequence is Arginyl-tRNA--protein transferase 1 (503 aa).

This sequence belongs to the R-transferase family.

The protein resides in the cytoplasm. The catalysed reaction is an N-terminal L-alpha-aminoacyl-[protein] + L-arginyl-tRNA(Arg) = an N-terminal L-arginyl-L-aminoacyl-[protein] + tRNA(Arg) + H(+). Its function is as follows. Involved in the post-translational conjugation of arginine to the N-terminal aspartate or glutamate of a protein. This arginylation is required for degradation of the protein via the ubiquitin pathway. Does not arginylate cysteine residues. This chain is Arginyl-tRNA--protein transferase 1 (ATE1), found in Saccharomyces cerevisiae (strain ATCC 204508 / S288c) (Baker's yeast).